We begin with the raw amino-acid sequence, 49 residues long: DNA-directed RNA polymerase subunit Rpo12 (49 aa).

Zn(2+) is bound by residues cysteine 11, cysteine 27, and cysteine 30.

Belongs to the archaeal Rpo12/eukaryotic RPC10 RNA polymerase subunit family. In terms of assembly, part of the RNA polymerase complex. The cofactor is Zn(2+).

The protein localises to the cytoplasm. Its subcellular location is the chromosome. It carries out the reaction RNA(n) + a ribonucleoside 5'-triphosphate = RNA(n+1) + diphosphate. DNA-dependent RNA polymerase (RNAP) catalyzes the transcription of DNA into RNA using the four ribonucleoside triphosphates as substrates. The sequence is that of DNA-directed RNA polymerase subunit Rpo12 from Thermococcus kodakarensis (strain ATCC BAA-918 / JCM 12380 / KOD1) (Pyrococcus kodakaraensis (strain KOD1)).